We begin with the raw amino-acid sequence, 193 residues long: D-alanyl-D-alanine dipeptidase (193 aa).

Positions 98 and 105 each coordinate Zn(2+). Glu-162 (proton donor/acceptor) is an active-site residue. His-165 serves as a coordination point for Zn(2+).

It belongs to the peptidase M15D family. It depends on Zn(2+) as a cofactor.

Its subcellular location is the cytoplasm. The catalysed reaction is D-alanyl-D-alanine + H2O = 2 D-alanine. In terms of biological role, catalyzes hydrolysis of the D-alanyl-D-alanine dipeptide. May have a role in cell-wall turnover. This Escherichia coli (strain K12) protein is D-alanyl-D-alanine dipeptidase.